The primary structure comprises 184 residues: MVVVAISGQPGSGKTTVAREVARVLKLPMVSSGSIFRELAAKYGMDLLEFHKYAEQNTEIDKIVDSIALEKAKAGNVVLEGHLTAWIVRPYADVCIYLKASKEVRARRVAMRDGVSFDAALREIEERERLNKKRYLAIYEIDIDNLSIFDLVLDTSYLSINDTVRISLDFICTSLNSKYMKNFC.

8 to 16 (GQPGSGKTT) contributes to the ATP binding site.

This sequence belongs to the cytidylate kinase family. Type 2 subfamily.

It is found in the cytoplasm. The catalysed reaction is CMP + ATP = CDP + ADP. It catalyses the reaction dCMP + ATP = dCDP + ADP. The sequence is that of Cytidylate kinase from Pyrobaculum calidifontis (strain DSM 21063 / JCM 11548 / VA1).